The sequence spans 152 residues: MSTSQTSADIQLIQRILPHRYPFLLVDKVVEIDGTTSALGIKNVTMNEPHFQGHFPGMPIMPGVTIVEAMAQTAAVMVGVTLEMADKEMKVYFMAIDKAKFRRKVIPGDVLEMRLNTLRGKPGGKVWRFGGVASVEGEMAAEVEFTAMMDMG.

H54 is an active-site residue.

This sequence belongs to the thioester dehydratase family. FabZ subfamily.

It is found in the cytoplasm. It carries out the reaction a (3R)-hydroxyacyl-[ACP] = a (2E)-enoyl-[ACP] + H2O. In terms of biological role, involved in unsaturated fatty acids biosynthesis. Catalyzes the dehydration of short chain beta-hydroxyacyl-ACPs and long chain saturated and unsaturated beta-hydroxyacyl-ACPs. This is 3-hydroxyacyl-[acyl-carrier-protein] dehydratase FabZ from Roseobacter denitrificans (strain ATCC 33942 / OCh 114) (Erythrobacter sp. (strain OCh 114)).